We begin with the raw amino-acid sequence, 434 residues long: D-amino acid dehydrogenase (434 aa).

Position 3–17 (3–17 (VLVLGSGVIGTTSAW)) interacts with FAD.

This sequence belongs to the DadA oxidoreductase family. The cofactor is FAD.

The enzyme catalyses a D-alpha-amino acid + A + H2O = a 2-oxocarboxylate + AH2 + NH4(+). It functions in the pathway amino-acid degradation; D-alanine degradation; NH(3) and pyruvate from D-alanine: step 1/1. Functionally, oxidative deamination of D-amino acids. The sequence is that of D-amino acid dehydrogenase from Stenotrophomonas maltophilia (strain K279a).